A 271-amino-acid polypeptide reads, in one-letter code: NADPH-dependent 7-cyano-7-deazaguanine reductase (271 aa).

79-81 serves as a coordination point for substrate; that stretch reads IES. 81–82 contributes to the NADPH binding site; the sequence is SK. Catalysis depends on cysteine 178, which acts as the Thioimide intermediate. Aspartate 185 (proton donor) is an active-site residue. 217-218 provides a ligand contact to substrate; it reads HE. 246-247 provides a ligand contact to NADPH; that stretch reads RG.

It belongs to the GTP cyclohydrolase I family. QueF type 2 subfamily. Homodimer.

It is found in the cytoplasm. It carries out the reaction 7-aminomethyl-7-carbaguanine + 2 NADP(+) = 7-cyano-7-deazaguanine + 2 NADPH + 3 H(+). Its pathway is tRNA modification; tRNA-queuosine biosynthesis. Catalyzes the NADPH-dependent reduction of 7-cyano-7-deazaguanine (preQ0) to 7-aminomethyl-7-deazaguanine (preQ1). The sequence is that of NADPH-dependent 7-cyano-7-deazaguanine reductase from Acinetobacter baylyi (strain ATCC 33305 / BD413 / ADP1).